The chain runs to 662 residues: Bifunctional polymyxin resistance protein ArnA (662 aa).

Positions Met-1–Leu-307 are formyltransferase ArnAFT. Catalysis depends on His-106, which acts as the Proton donor; for formyltransferase activity. (6R)-10-formyltetrahydrofolate contacts are provided by residues Arg-116 and Ile-138–Asp-142. The tract at residues Arg-316 to Ala-662 is dehydrogenase ArnADH. Residues Asp-349 and Asp-370–Ile-371 each bind NAD(+). Residues Ala-395, Tyr-400, and Thr-434 to Ser-435 each bind UDP-alpha-D-glucuronate. The active-site Proton acceptor; for decarboxylase activity is the Glu-436. Residues Arg-462, Asn-493, Arg-527–Arg-536, and Tyr-614 each bind UDP-alpha-D-glucuronate. Arg-620 functions as the Proton donor; for decarboxylase activity in the catalytic mechanism.

This sequence in the N-terminal section; belongs to the Fmt family. UDP-L-Ara4N formyltransferase subfamily. The protein in the C-terminal section; belongs to the NAD(P)-dependent epimerase/dehydratase family. UDP-glucuronic acid decarboxylase subfamily. In terms of assembly, homohexamer, formed by a dimer of trimers.

The catalysed reaction is UDP-alpha-D-glucuronate + NAD(+) = UDP-beta-L-threo-pentopyranos-4-ulose + CO2 + NADH. It catalyses the reaction UDP-4-amino-4-deoxy-beta-L-arabinose + (6R)-10-formyltetrahydrofolate = UDP-4-deoxy-4-formamido-beta-L-arabinose + (6S)-5,6,7,8-tetrahydrofolate + H(+). It functions in the pathway nucleotide-sugar biosynthesis; UDP-4-deoxy-4-formamido-beta-L-arabinose biosynthesis; UDP-4-deoxy-4-formamido-beta-L-arabinose from UDP-alpha-D-glucuronate: step 1/3. Its pathway is nucleotide-sugar biosynthesis; UDP-4-deoxy-4-formamido-beta-L-arabinose biosynthesis; UDP-4-deoxy-4-formamido-beta-L-arabinose from UDP-alpha-D-glucuronate: step 3/3. It participates in bacterial outer membrane biogenesis; lipopolysaccharide biosynthesis. Functionally, bifunctional enzyme that catalyzes the oxidative decarboxylation of UDP-glucuronic acid (UDP-GlcUA) to UDP-4-keto-arabinose (UDP-Ara4O) and the addition of a formyl group to UDP-4-amino-4-deoxy-L-arabinose (UDP-L-Ara4N) to form UDP-L-4-formamido-arabinose (UDP-L-Ara4FN). The modified arabinose is attached to lipid A and is required for resistance to polymyxin and cationic antimicrobial peptides. The protein is Bifunctional polymyxin resistance protein ArnA of Pseudomonas aeruginosa (strain ATCC 15692 / DSM 22644 / CIP 104116 / JCM 14847 / LMG 12228 / 1C / PRS 101 / PAO1).